A 252-amino-acid polypeptide reads, in one-letter code: Imidazole glycerol phosphate synthase subunit HisF (252 aa).

Residues Asp11 and Asp130 contribute to the active site.

The protein belongs to the HisA/HisF family. In terms of assembly, heterodimer of HisH and HisF.

It localises to the cytoplasm. It catalyses the reaction 5-[(5-phospho-1-deoxy-D-ribulos-1-ylimino)methylamino]-1-(5-phospho-beta-D-ribosyl)imidazole-4-carboxamide + L-glutamine = D-erythro-1-(imidazol-4-yl)glycerol 3-phosphate + 5-amino-1-(5-phospho-beta-D-ribosyl)imidazole-4-carboxamide + L-glutamate + H(+). It functions in the pathway amino-acid biosynthesis; L-histidine biosynthesis; L-histidine from 5-phospho-alpha-D-ribose 1-diphosphate: step 5/9. Its function is as follows. IGPS catalyzes the conversion of PRFAR and glutamine to IGP, AICAR and glutamate. The HisF subunit catalyzes the cyclization activity that produces IGP and AICAR from PRFAR using the ammonia provided by the HisH subunit. This is Imidazole glycerol phosphate synthase subunit HisF from Polynucleobacter asymbioticus (strain DSM 18221 / CIP 109841 / QLW-P1DMWA-1) (Polynucleobacter necessarius subsp. asymbioticus).